Consider the following 307-residue polypeptide: Elongation factor Ts (307 aa).

An involved in Mg(2+) ion dislocation from EF-Tu region spans residues 82-85 (TDFV).

It belongs to the EF-Ts family.

Its subcellular location is the cytoplasm. Its function is as follows. Associates with the EF-Tu.GDP complex and induces the exchange of GDP to GTP. It remains bound to the aminoacyl-tRNA.EF-Tu.GTP complex up to the GTP hydrolysis stage on the ribosome. The chain is Elongation factor Ts from Nautilia profundicola (strain ATCC BAA-1463 / DSM 18972 / AmH).